A 1126-amino-acid chain; its full sequence is DNA-directed RNA polymerase subunit Rpo2 (1126 aa).

4 residues coordinate Zn(2+): Cys-1060, Cys-1063, Cys-1078, and His-1081.

The protein belongs to the RNA polymerase beta chain family. In terms of assembly, part of the 13-subunit RNA polymerase complex. Interacts with TFS4. As to quaternary structure, (Microbial infection) Binds viral protein RIP which blocks global transcription. Zn(2+) is required as a cofactor.

It localises to the cytoplasm. The catalysed reaction is RNA(n) + a ribonucleoside 5'-triphosphate = RNA(n+1) + diphosphate. Its function is as follows. DNA-dependent RNA polymerase (RNAP) catalyzes the transcription of DNA into RNA using the four ribonucleoside triphosphates as substrates. This subunit is involved in DNA promoter recognition. This is DNA-directed RNA polymerase subunit Rpo2 from Sulfolobus acidocaldarius (strain ATCC 33909 / DSM 639 / JCM 8929 / NBRC 15157 / NCIMB 11770).